Reading from the N-terminus, the 458-residue chain is ATP synthase subunit beta (458 aa).

148-155 (GGAGVGKT) lines the ATP pocket.

This sequence belongs to the ATPase alpha/beta chains family. As to quaternary structure, F-type ATPases have 2 components, CF(1) - the catalytic core - and CF(0) - the membrane proton channel. CF(1) has five subunits: alpha(3), beta(3), gamma(1), delta(1), epsilon(1). CF(0) has three main subunits: a(1), b(2) and c(9-12). The alpha and beta chains form an alternating ring which encloses part of the gamma chain. CF(1) is attached to CF(0) by a central stalk formed by the gamma and epsilon chains, while a peripheral stalk is formed by the delta and b chains.

The protein resides in the cell inner membrane. It carries out the reaction ATP + H2O + 4 H(+)(in) = ADP + phosphate + 5 H(+)(out). In terms of biological role, produces ATP from ADP in the presence of a proton gradient across the membrane. The catalytic sites are hosted primarily by the beta subunits. The sequence is that of ATP synthase subunit beta from Pseudomonas fluorescens (strain Pf0-1).